The sequence spans 179 residues: Large ribosomal subunit protein uL5 (179 aa).

This sequence belongs to the universal ribosomal protein uL5 family. Part of the 50S ribosomal subunit; part of the 5S rRNA/L5/L18/L25 subcomplex. Contacts the 5S rRNA and the P site tRNA. Forms a bridge to the 30S subunit in the 70S ribosome.

Its function is as follows. This is one of the proteins that bind and probably mediate the attachment of the 5S RNA into the large ribosomal subunit, where it forms part of the central protuberance. In the 70S ribosome it contacts protein S13 of the 30S subunit (bridge B1b), connecting the 2 subunits; this bridge is implicated in subunit movement. Contacts the P site tRNA; the 5S rRNA and some of its associated proteins might help stabilize positioning of ribosome-bound tRNAs. This chain is Large ribosomal subunit protein uL5, found in Prochlorococcus marinus (strain MIT 9215).